Here is a 132-residue protein sequence, read N- to C-terminus: MFYKNRPLSPYVTIYSSQWTSISSIFHRLSGLYLVFFLFVLFCSIKFLFCFSTFWFVYKFVKTCFFFILSFFIVFIVFSMYSLFYHFFIGLRHLVWDEVILMEDNFVTMSTKLSLSLSLVLVLINCLRYFLV.

Helical transmembrane passes span 32 to 49 (LYLVFFLFVLFCSIKFLF) and 59 to 81 (KFVKTCFFFILSFFIVFIVFSMY). Residue H86 coordinates heme. A helical membrane pass occupies residues 107-127 (VTMSTKLSLSLSLVLVLINCL).

It belongs to the cytochrome b560 family. Forms part of complex II containing four subunits: a 70 kDa flavoprotein (FP), a 27 kDa iron-sulfur protein (IP), a cytochrome B and a membrane-anchoring protein. The cofactor is heme.

The protein localises to the mitochondrion inner membrane. It functions in the pathway carbohydrate metabolism; tricarboxylic acid cycle. Functionally, membrane-anchoring subunit of succinate dehydrogenase (SDH) that is involved in complex II of the mitochondrial electron transport chain and is responsible for transferring electrons from succinate to ubiquinone (coenzyme Q). In Cyanidium caldarium (Red alga), this protein is Succinate dehydrogenase cytochrome b560 subunit (SDH3).